A 345-amino-acid chain; its full sequence is Tyrosine-binding protein (345 aa).

Positions 1 to 23 (MIKSKKILSLIIAGVLGVSMLTG) are cleaved as a signal peptide. A lipid anchor (N-palmitoyl cysteine) is attached at cysteine 24. A lipid anchor (S-diacylglycerol cysteine) is attached at cysteine 24.

In terms of assembly, the complex is probably composed of two ATP-binding proteins (CDR20291_0806), two transmembrane proteins (CDR20291_0807) and a solute-binding protein (CDR20291_0805).

The protein localises to the cell membrane. Probably part of an ABC transporter complex involved in tyrosine uptake. May also import phenylalanine. The protein is Tyrosine-binding protein of Clostridioides difficile (strain R20291) (Peptoclostridium difficile).